The chain runs to 702 residues: Putative GMC-type oxidoreductase R135 (702 aa).

Residues 55-75 (LTGDIVIIGAGAAGSLLAHYL) traverse the membrane as a helical segment. 58–88 (DIVIIGAGAAGSLLAHYLARFSNMKIILLEA) is a binding site for FAD. Histidine 628 is an active-site residue.

The protein belongs to the GMC oxidoreductase family. It depends on FAD as a cofactor.

It is found in the virion. The protein resides in the host membrane. The chain is Putative GMC-type oxidoreductase R135 from Acanthamoeba polyphaga (Amoeba).